Consider the following 283-residue polypeptide: Pantothenate synthetase (283 aa).

30–37 (MGNLHDGH) contacts ATP. Residue His37 is the Proton donor of the active site. Residue Gln61 participates in (R)-pantoate binding. Gln61 is a binding site for beta-alanine. ATP is bound at residue 149–152 (GEKD). Gln155 is a binding site for (R)-pantoate. An ATP-binding site is contributed by 186–189 (LSSR).

The protein belongs to the pantothenate synthetase family. As to quaternary structure, homodimer.

The protein localises to the cytoplasm. The catalysed reaction is (R)-pantoate + beta-alanine + ATP = (R)-pantothenate + AMP + diphosphate + H(+). The protein operates within cofactor biosynthesis; (R)-pantothenate biosynthesis; (R)-pantothenate from (R)-pantoate and beta-alanine: step 1/1. Catalyzes the condensation of pantoate with beta-alanine in an ATP-dependent reaction via a pantoyl-adenylate intermediate. This is Pantothenate synthetase from Escherichia coli O45:K1 (strain S88 / ExPEC).